The primary structure comprises 508 residues: Photosystem II CP47 reaction center protein (508 aa).

A run of 6 helical transmembrane segments spans residues 21–36, 101–115, 140–156, 203–218, 237–252, and 457–472; these read SVHIMHTALVAGWAGS, IVFSGLCFLAAIWHW, GIHLFLSGVACFGFGAF, IAAGILGILAGLFHLS, VLSSSIAAVFFAAFIV, and TFALLFFSGHIWHGAR.

It belongs to the PsbB/PsbC family. PsbB subfamily. As to quaternary structure, PSII is composed of 1 copy each of membrane proteins PsbA, PsbB, PsbC, PsbD, PsbE, PsbF, PsbH, PsbI, PsbJ, PsbK, PsbL, PsbM, PsbT, PsbX, PsbY, PsbZ, Psb30/Ycf12, at least 3 peripheral proteins of the oxygen-evolving complex and a large number of cofactors. It forms dimeric complexes. Binds multiple chlorophylls. PSII binds additional chlorophylls, carotenoids and specific lipids. is required as a cofactor.

It localises to the plastid. The protein resides in the chloroplast thylakoid membrane. Functionally, one of the components of the core complex of photosystem II (PSII). It binds chlorophyll and helps catalyze the primary light-induced photochemical processes of PSII. PSII is a light-driven water:plastoquinone oxidoreductase, using light energy to abstract electrons from H(2)O, generating O(2) and a proton gradient subsequently used for ATP formation. The sequence is that of Photosystem II CP47 reaction center protein from Pinus thunbergii (Japanese black pine).